Consider the following 420-residue polypeptide: Phosphoglycerate kinase, cytosolic (420 aa).

Residues valine 23, aspartate 24, phenylalanine 25, asparagine 26, arginine 39, serine 61, histidine 62, glycine 64, arginine 65, arginine 135, histidine 171, and arginine 172 each contribute to the (2R)-3-phosphoglycerate site. ADP contacts are provided by glycine 217 and alanine 218. Glycine 217 provides a ligand contact to CDP. Residues alanine 218 and lysine 219 each contribute to the AMP site. Alanine 218 is a binding site for ATP. Alanine 218 contacts Mg(2+). Lysine 219 lines the (2R)-3-phosphoglycerate pocket. Aspartate 222 contributes to the CDP binding site. Position 222 (aspartate 222) interacts with Mg(2+). The ADP site is built by lysine 223 and glycine 241. Position 223 (lysine 223) interacts with AMP. Lysine 223 serves as a coordination point for ATP. Glycine 241 lines the CDP pocket. AMP is bound by residues alanine 242 and alanine 314. Residues alanine 242 and alanine 314 each contribute to the ATP site. The ADP site is built by alanine 314 and asparagine 338. Residues glycine 339 and phenylalanine 344 each coordinate CDP. Residues phenylalanine 344, glutamate 345, glutamate 377, and serine 378 each coordinate ADP. Glutamate 345 contributes to the AMP binding site. The ATP site is built by glutamate 345, glutamate 377, and serine 378. Glutamate 377 is a Mg(2+) binding site.

Belongs to the phosphoglycerate kinase family. Monomer. Mg(2+) is required as a cofactor.

It is found in the cytoplasm. It carries out the reaction (2R)-3-phosphoglycerate + ATP = (2R)-3-phospho-glyceroyl phosphate + ADP. It functions in the pathway carbohydrate degradation; glycolysis; pyruvate from D-glyceraldehyde 3-phosphate: step 2/5. In Trypanosoma brucei brucei, this protein is Phosphoglycerate kinase, cytosolic.